Reading from the N-terminus, the 277-residue chain is Glucose-6-phosphatase catalytic subunit 1 (277 aa).

R4 contacts substrate. Helical transmembrane passes span 39 to 59 (GHAM…LSIA) and 67 to 87 (LLYR…ELVV). H40 (proton donor) is an active-site residue. Substrate is bound at residue R91. The active-site Nucleophile is H97. Transmembrane regions (helical) follow at residues 131–151 (FLIT…LKAL), 215–235 (IGCI…TFSP), and 250–270 (AVAL…IYPV). Positions 274-277 (GKNL) match the Prevents secretion from ER motif.

The protein belongs to the glucose-6-phosphatase family.

The protein resides in the endoplasmic reticulum membrane. It catalyses the reaction D-glucose 6-phosphate + H2O = D-glucose + phosphate. The protein operates within carbohydrate biosynthesis; gluconeogenesis. Hydrolyzes glucose-6-phosphate to glucose in the endoplasmic reticulum. Forms with the glucose-6-phosphate transporter (SLC37A4/G6PT) the complex responsible for glucose production in the terminal step of glycogenolysis and gluconeogenesis. Hence, it is the key enzyme in homeostatic regulation of blood glucose levels. This is Glucose-6-phosphatase catalytic subunit 1 (g6pc1) from Haplochromis xenognathus (Lake Victoria cichlid).